Here is a 103-residue protein sequence, read N- to C-terminus: UPF0298 protein LACR_0404 (103 aa).

It belongs to the UPF0298 family.

It is found in the cytoplasm. The protein is UPF0298 protein LACR_0404 of Lactococcus lactis subsp. cremoris (strain SK11).